The following is a 276-amino-acid chain: Probable endonuclease 4 (276 aa).

9 residues coordinate Zn(2+): His-70, His-108, Glu-143, Asp-176, His-179, His-210, Asp-223, His-225, and Glu-255.

Belongs to the AP endonuclease 2 family. Requires Zn(2+) as cofactor.

The catalysed reaction is Endonucleolytic cleavage to 5'-phosphooligonucleotide end-products.. Endonuclease IV plays a role in DNA repair. It cleaves phosphodiester bonds at apurinic or apyrimidinic (AP) sites, generating a 3'-hydroxyl group and a 5'-terminal sugar phosphate. In Mesomycoplasma hyopneumoniae (strain 7448) (Mycoplasma hyopneumoniae), this protein is Probable endonuclease 4.